The primary structure comprises 185 residues: MIEPLPRILVSELCKFVMAILNILRYPDERLHKIATEVPSITREIRTLVSNMAETMYAAPGIGLAATQVDVHQRIIVIDVSETRDELLVLINPEIIASSGNAETQEGCLSVPGIFDKVTRAEEVTVRATGIDGKSFEMDASGLLAVCIQHEMDHLMGKVFVEYLSPFKQSRILSKLKKQARRQIA.

2 residues coordinate Fe cation: cysteine 108 and histidine 150. Glutamate 151 is an active-site residue. Residue histidine 154 coordinates Fe cation.

The protein belongs to the polypeptide deformylase family. The cofactor is Fe(2+).

It carries out the reaction N-terminal N-formyl-L-methionyl-[peptide] + H2O = N-terminal L-methionyl-[peptide] + formate. Its function is as follows. Removes the formyl group from the N-terminal Met of newly synthesized proteins. Requires at least a dipeptide for an efficient rate of reaction. N-terminal L-methionine is a prerequisite for activity but the enzyme has broad specificity at other positions. This is Peptide deformylase 2 from Nitrosomonas europaea (strain ATCC 19718 / CIP 103999 / KCTC 2705 / NBRC 14298).